We begin with the raw amino-acid sequence, 179 residues long: DELTA-actitoxin-Afr1c (179 aa).

Positions 1-29 (SAEVAGAIIDGASLTFDVLQTVLKALGDV) are N-terminal alpha-helix that contributes to the pore. The interval 11-30 (GASLTFDVLQTVLKALGDVS) is N-terminal region. Residue R31 participates in an N-(acyl)-sphingosylphosphocholine binding. Residues Y51 and R53 each coordinate N-acetyl-D-glucosamine 6-sulfate. 12 residues coordinate an N-(acyl)-sphingosylphosphocholine: R53, S54, R79, G85, Y113, S114, W116, Y133, Y137, Y138, R144, and G168. The trp-rich region, which is important for the binding to lipid membrane stretch occupies residues 105–120 (SIPFDYNLYSNWWNVK). Y138 serves as a coordination point for N-acetyl-D-glucosamine 6-sulfate. The Cell attachment site, crucial for protein stability signature appears at 144–146 (RGD).

This sequence belongs to the actinoporin family. Sea anemone subfamily. As to quaternary structure, octamer or nonamer in membranes. Monomer in the soluble state.

It localises to the secreted. Its subcellular location is the nematocyst. The protein localises to the target cell membrane. Its function is as follows. Pore-forming toxin (PFT) that consists of a crown-shaped octamer or nonamer that forms cation-selective hydrophilic pores of about 1.5 nm (inside) and 13 nm (outside) and causes cytolysis. It causes cardiac stimulation. Also causes hemolysis (HC(50)=0.3 nM). Interestingly, the Phe-16 is crucial for hemolysis. Pore formation is a multi-step process that involves specific recognition of membrane sphingomyelin (but neither cholesterol nor phosphatidylcholine) using aromatic rich region and adjacent phosphocholine (POC) binding site, firm binding to the membrane (mainly driven by hydrophobic interactions) accompanied by the transfer of the N-terminal region to the lipid-water interface and finally pore formation after oligomerization of monomers. It is probable that a dimeric form is an assembly intermediate before the complete oligomerization. The formation of stable pores occurs only in vesicles composed of DOPC/SM (there is no oligomerization when the PFT is treated with vesicles of DOPC or SM alone). The transmembrane pore displays 8 lateral perforations, one at each subunit-subunit interface, partially occupied by the acyl-chain region of a bridging lipid. Each pore contains 24 lipid molecules, firmly bound to each subunit, that is, 3 lipids (L1, L2, L3, L4 and/or L5) are associated to each subunit. Lipid L1 bridges 2 subunits, whereas lipids L2 and L3 bind to sites at single subunit. This chain is DELTA-actitoxin-Afr1c, found in Actinia fragacea (Strawberry anemone).